We begin with the raw amino-acid sequence, 474 residues long: Putative response regulator NtrX-like (474 aa).

A Response regulatory domain is found at 5 to 121; sequence DVLIVDDEES…KLVILLTRAC (117 aa). Asp-54 is modified (4-aspartylphosphate). Positions 143-368 constitute a Sigma-54 factor interaction domain; it reads LVGECSVTLK…LRNVVEWTLI (226 aa). Residues 171–178 and 231–240 contribute to the ATP site; these read GKVGSGKE and ANNGTLYIDE.

Member of the two-component regulatory system RC0849/RC0948. In Rickettsia conorii (strain ATCC VR-613 / Malish 7), this protein is Putative response regulator NtrX-like.